Reading from the N-terminus, the 465-residue chain is Putative F-box/LRR-repeat protein At3g28410 (465 aa).

The region spanning 27 to 73 (ADFINYMPDDILHHILSFIPTDLAMRTSVLSRRWRHVWCETPCLDIK) is the F-box domain. 7 LRR repeats span residues 127-155 (VRDFTYTKTYRFPDIFYISSSLKQLDVTL), 178-203 (FCQIPDESMHNILSGCPILESLTLDT), 207-225 (LERLDLSKSPNLRRLDINR), 278-302 (ADRYQTMALEMLSKFHNVKRLTVGE), 332-357 (FVRSVIPGISRLLQNSPGLKKLTLHT), 402-427 (TSKLVASFMNLVLRNAKTLERMVVWL), and 447-465 (VETLSHNNNVSILLKQSNC).

This chain is Putative F-box/LRR-repeat protein At3g28410, found in Arabidopsis thaliana (Mouse-ear cress).